An 80-amino-acid polypeptide reads, in one-letter code: MSRICQITRKKSMKGNSVAHSNHKTRRKFNVNFFSKRFYWVEKDCWIKLNISANGLRTINKIGLDAAIKQASKKGYLIIQ.

The segment at methionine 1 to serine 21 is disordered.

It belongs to the bacterial ribosomal protein bL28 family.

The chain is Large ribosomal subunit protein bL28 from Azobacteroides pseudotrichonymphae genomovar. CFP2.